We begin with the raw amino-acid sequence, 229 residues long: uncharacterized protein (229 aa).

Residues 61–229 (MQAEDKVSKP…TESEDKPKRG (169 aa)) form a disordered region. A compositionally biased stretch (basic and acidic residues) spans 109–128 (QQEKQQPEKAVVEQQEKQQP). Positions 166–194 (QPEQPERQQQAQPERQQQAQPERQQQAQP) are enriched in low complexity. Residues 195 to 204 (EEAEDAEQEP) show a composition bias toward acidic residues. Positions 218–229 (TQTESEDKPKRG) are enriched in basic and acidic residues.

This is an uncharacterized protein from Frog virus 3 (isolate Goorha) (FV-3).